A 177-amino-acid polypeptide reads, in one-letter code: Large ribosomal subunit protein uL6 (177 aa).

This sequence belongs to the universal ribosomal protein uL6 family. Part of the 50S ribosomal subunit.

This protein binds to the 23S rRNA, and is important in its secondary structure. It is located near the subunit interface in the base of the L7/L12 stalk, and near the tRNA binding site of the peptidyltransferase center. The polypeptide is Large ribosomal subunit protein uL6 (Pseudomonas fluorescens (strain Pf0-1)).